A 309-amino-acid polypeptide reads, in one-letter code: tRNA-cytidine(32) 2-sulfurtransferase (309 aa).

A PP-loop motif motif is present at residues 45 to 50; that stretch reads SGGKDS. Residues Cys120, Cys123, and Cys211 each coordinate [4Fe-4S] cluster.

Belongs to the TtcA family. Homodimer. Mg(2+) is required as a cofactor. [4Fe-4S] cluster serves as cofactor.

Its subcellular location is the cytoplasm. It carries out the reaction cytidine(32) in tRNA + S-sulfanyl-L-cysteinyl-[cysteine desulfurase] + AH2 + ATP = 2-thiocytidine(32) in tRNA + L-cysteinyl-[cysteine desulfurase] + A + AMP + diphosphate + H(+). It functions in the pathway tRNA modification. In terms of biological role, catalyzes the ATP-dependent 2-thiolation of cytidine in position 32 of tRNA, to form 2-thiocytidine (s(2)C32). The sulfur atoms are provided by the cysteine/cysteine desulfurase (IscS) system. In Psychromonas ingrahamii (strain DSM 17664 / CCUG 51855 / 37), this protein is tRNA-cytidine(32) 2-sulfurtransferase.